We begin with the raw amino-acid sequence, 62 residues long: Alpha-conotoxin-like Bn1.3 (62 aa).

The signal sequence occupies residues 1–18; sequence MGMRMMFTVFLLVVLATA. Positions 19 to 48 are excised as a propeptide; that stretch reads VLPVTLDRASDGRNAAANAKTPRLIAPFIR. Cystine bridges form between Cys-51-Cys-57 and Cys-52-Cys-61. Cysteine amide is present on Cys-61.

Belongs to the conotoxin A superfamily. Expressed by the venom duct.

The protein resides in the secreted. In terms of biological role, does not show activity on the acetylcholine receptors tested. The chain is Alpha-conotoxin-like Bn1.3 from Conus bandanus (Banded marble cone).